Reading from the N-terminus, the 34-residue chain is Cycloamanide B proprotein (34 aa).

Residues 1–10 constitute a propeptide that is removed on maturation; it reads MSDINAARLP. A cross-link (cyclopeptide (Ser-Pro)) is located at residues 11 to 17; it reads SFFFPIP. The propeptide occupies 18–34; that stretch reads CISDDIEMVLTRGESLC.

The protein belongs to the MSDIN fungal toxin family. In terms of processing, processed by the macrocyclase-peptidase enzyme POPB to yield a cyclic decapeptide. POPB first removes 10 residues from the N-terminus. Conformational trapping of the remaining peptide forces the enzyme to release this intermediate rather than proceed to macrocyclization. The enzyme rebinds the remaining peptide in a different conformation and catalyzes macrocyclization of the N-terminal 7 residues.

Cyclic heptapeptide that belongs to the MSDIN-like toxin family responsible for a large number of food poisoning cases and deaths. Cycloaminide B is non-toxic to mammals but shows immunosuppressive activity, probably through the inhibition of the action of interleukin-1 and interleukin-2. In Amanita phalloides (Death cap), this protein is Cycloamanide B proprotein.